We begin with the raw amino-acid sequence, 429 residues long: Integral membrane protein GPR137C (429 aa).

The segment covering 1–17 (MRVSVPGPAAAAAPAAG) has biased composition (low complexity). Residues 1-29 (MRVSVPGPAAAAAPAAGREPSTPGGGSGG) form a disordered region. Topologically, residues 1–48 (MRVSVPGPAAAAAPAAGREPSTPGGGSGGGGAVAAASGAAVPGSVQLA) are lumenal. A helical membrane pass occupies residues 49–69 (LSVLHALLYAALFAFAYLQLW). At 70-83 (RLLLYRERRLSYQS) the chain is on the cytoplasmic side. The helical transmembrane segment at 84 to 104 (LCLFLCLLWAALRTTLFSAAF) threads the bilayer. Topologically, residues 105–120 (SLSGSLPLLRPPAHLH) are lumenal. Residues 121–141 (FFPHWLLYCFPSCLQFSTLCL) form a helical membrane-spanning segment. Over 142–167 (LNLYLAEVICKVRCATELDRHKILLH) the chain is Cytoplasmic. Residues 168–188 (LGFIMASLLFLVVNLTCAMLV) traverse the membrane as a helical segment. At 189–205 (HGDVPENQLKWTVFVRA) the chain is on the lumenal side. A helical membrane pass occupies residues 206–226 (LINDSLFILCAISLVCYICKI). Residues 227–246 (TKMSSANVYLESKGMSLCQT) lie on the Cytoplasmic side of the membrane. The chain crosses the membrane as a helical span at residues 247-267 (VVVGSVVILLYSSRACYNLVV). At 268–300 (VTISQDTLESPFNYGWDNLSDKAHVEDISGEEY) the chain is on the lumenal side. A glycan (N-linked (GlcNAc...) asparagine) is linked at Asn285. Residues 301 to 321 (IVFGMVLFLWEHVPAWSVVLF) traverse the membrane as a helical segment. Residues 322–429 (FRAQRLNQNL…HHSLYVTPQN (108 aa)) lie on the Cytoplasmic side of the membrane.

It belongs to the GPR137 family.

Its subcellular location is the lysosome membrane. In terms of biological role, lysosomal integral membrane protein that may regulate MTORC1 complex translocation to lysosomes. This Homo sapiens (Human) protein is Integral membrane protein GPR137C (GPR137C).